Reading from the N-terminus, the 234-residue chain is Small ribosomal subunit protein eS1y (234 aa).

Basic residues predominate over residues 1-18 (MAVGKNKRISKGKKGGKK). The segment at 1 to 20 (MAVGKNKRISKGKKGGKKKA) is disordered.

This sequence belongs to the eukaryotic ribosomal protein eS1 family. In terms of assembly, component of the small ribosomal subunit. Mature ribosomes consist of a small (40S) and a large (60S) subunit. The 40S subunit contains about 33 different proteins and 1 molecule of RNA (18S). The 60S subunit contains about 49 different proteins and 3 molecules of RNA (25S, 5.8S and 5S).

The protein localises to the cytoplasm. The protein is Small ribosomal subunit protein eS1y of Vitis vinifera (Grape).